Reading from the N-terminus, the 653-residue chain is DUF21 domain-containing protein At1g55930, chloroplastic (653 aa).

The N-terminal 72 residues, 1–72 (MELDLSVLGR…DFSHRCQFVV (72 aa)), are a transit peptide targeting the chloroplast. 5 helical membrane passes run 103-123 (GIVL…KVLA), 157-177 (GLIL…ETSI), 208-228 (FLTT…ALVT), 234-254 (IFGE…ILLL), and 280-300 (WLSL…MGIL). The CNNM transmembrane domain maps to 149 to 335 (VLKVLREQGL…ELSGAIEEEE (187 aa)). CBS domains lie at 354–415 (MTPL…LLES) and 421–479 (MAHK…IFDE).

The protein localises to the plastid. It is found in the chloroplast membrane. The polypeptide is DUF21 domain-containing protein At1g55930, chloroplastic (CBSDUFCH2) (Arabidopsis thaliana (Mouse-ear cress)).